Consider the following 131-residue polypeptide: Conotoxin Cal8.1 (131 aa).

The first 19 residues, 1–19 (MKLLLTLLLGSALMCITLA), serve as a signal peptide directing secretion. Residues 20–38 (DECGLGTHRPVKEVIDNVR) constitute a propeptide that is removed on maturation.

In terms of processing, contains 4 disulfide bonds. As to expression, expressed by the venom duct.

The protein localises to the secreted. In terms of biological role, probable neurotoxin with unknown target. Possibly targets ion channels. This Californiconus californicus (California cone) protein is Conotoxin Cal8.1.